A 255-amino-acid polypeptide reads, in one-letter code: Protein N-terminal and lysine N-methyltransferase efm7 (255 aa).

Positions 1–25 (MADNDFEGFGIFEEPEGFRPSTPPP) are disordered. S-adenosyl-L-methionine-binding positions include tryptophan 58, 84–86 (GAG), aspartate 106, tryptophan 137, and serine 162.

Belongs to the class I-like SAM-binding methyltransferase superfamily. EFM7 family.

The protein resides in the cytoplasm. In terms of biological role, S-adenosyl-L-methionine-dependent protein methyltransferase that trimethylates the N-terminal glycine 'Gly-2' of elongation factor 1-alpha, before also catalyzing the mono- and dimethylation of 'Lys-3'. In Schizosaccharomyces pombe (strain 972 / ATCC 24843) (Fission yeast), this protein is Protein N-terminal and lysine N-methyltransferase efm7.